The primary structure comprises 175 residues: Pycsar effector protein RsPycTM (175 aa).

Transmembrane regions (helical) follow at residues 17–37 (AKNA…ITLL), 44–64 (PLGF…AAII), and 146–166 (AGSL…LFCI).

It localises to the cell inner membrane. In terms of biological role, pycsar (pyrimidine cyclase system for antiphage resistance) provides immunity against bacteriophage. The pyrimidine cyclase (PycC) synthesizes cyclic nucleotides in response to infection; these serve as specific second messenger signals. The signals activate the nearby effector, leading to bacterial cell death and abortive phage infection. A clade A Pycsar system. Its function is as follows. The effector gene of a two-gene Pycsar system. Expression of this and uridylate cyclase RsPycC (AC A0A4R2TZQ0) probably confers resistance to bacteriophage. The genes are probably only expressed in response to bacteriophage infection. Probably only responds to cUMP (produced by its cognate NTP cyclase), acts by impairing membrane integrity. The polypeptide is Pycsar effector protein RsPycTM (Rhizobium sp. (strain PP-F2F-G36)).